The sequence spans 203 residues: Proteasome subunit beta 2 (203 aa).

A propeptide spans 1 to 9 (MGEEVSIGA) (removed in mature form; by autocatalysis). The active-site Nucleophile is threonine 10.

It belongs to the peptidase T1B family. In terms of assembly, the 20S proteasome core is composed of 14 alpha and 14 beta subunits that assemble into four stacked heptameric rings, resulting in a barrel-shaped structure. The two inner rings, each composed of seven catalytic beta subunits, are sandwiched by two outer rings, each composed of seven alpha subunits. The catalytic chamber with the active sites is on the inside of the barrel. Has a gated structure, the ends of the cylinder being occluded by the N-termini of the alpha-subunits. Is capped at one or both ends by the proteasome regulatory ATPase, PAN.

It localises to the cytoplasm. It catalyses the reaction Cleavage of peptide bonds with very broad specificity.. With respect to regulation, the formation of the proteasomal ATPase PAN-20S proteasome complex, via the docking of the C-termini of PAN into the intersubunit pockets in the alpha-rings, triggers opening of the gate for substrate entry. Interconversion between the open-gate and close-gate conformations leads to a dynamic regulation of the 20S proteasome proteolysis activity. Component of the proteasome core, a large protease complex with broad specificity involved in protein degradation. This is Proteasome subunit beta 2 from Pyrobaculum calidifontis (strain DSM 21063 / JCM 11548 / VA1).